Here is a 692-residue protein sequence, read N- to C-terminus: Elongation factor G (692 aa).

In terms of domain architecture, tr-type G spans 8–282; it reads EKTRNIGIMA…AVLDYLPAPT (275 aa). GTP contacts are provided by residues 17 to 24, 81 to 85, and 135 to 138; these read AHIDAGKT, DTPGH, and NKMD.

This sequence belongs to the TRAFAC class translation factor GTPase superfamily. Classic translation factor GTPase family. EF-G/EF-2 subfamily.

Its subcellular location is the cytoplasm. Functionally, catalyzes the GTP-dependent ribosomal translocation step during translation elongation. During this step, the ribosome changes from the pre-translocational (PRE) to the post-translocational (POST) state as the newly formed A-site-bound peptidyl-tRNA and P-site-bound deacylated tRNA move to the P and E sites, respectively. Catalyzes the coordinated movement of the two tRNA molecules, the mRNA and conformational changes in the ribosome. This chain is Elongation factor G, found in Bacillus velezensis (strain DSM 23117 / BGSC 10A6 / LMG 26770 / FZB42) (Bacillus amyloliquefaciens subsp. plantarum).